The sequence spans 95 residues: Protein TusB (95 aa).

This sequence belongs to the DsrH/TusB family. As to quaternary structure, heterohexamer, formed by a dimer of trimers. The hexameric TusBCD complex contains 2 copies each of TusB, TusC and TusD. The TusBCD complex interacts with TusE.

The protein localises to the cytoplasm. Its function is as follows. Part of a sulfur-relay system required for 2-thiolation of 5-methylaminomethyl-2-thiouridine (mnm(5)s(2)U) at tRNA wobble positions. In Shigella flexneri, this protein is Protein TusB.